We begin with the raw amino-acid sequence, 625 residues long: Pyriculol/pyriculariol biosynthesis cluster transcription factor 1 (625 aa).

2 disordered regions span residues 1 to 83 (MATE…ATQD) and 466 to 496 (PMSA…LPAS). The span at 46-59 (TPSPSTPANPNSAS) shows a compositional bias: low complexity. The segment at residues 73 to 132 (KNQKRQRATQDQLTTLEQEFAKNPTPTATVRDRIAEEINMTERSVQIWFQNRRAKIKLMA) is a DNA-binding region (homeobox). Polar residues predominate over residues 467–496 (MSATTAPSPSEYNSPSFFSQAPENTPLPAS).

It localises to the nucleus. Transcriptional regulator; part of the gene cluster that mediates the biosynthesis of pyriculol and pyriculariol, two heptaketides that induce lesion formation upon application on rice leaves but are dispensable for pathogenicity. With TRF1, negatively regulates the expression of the gene cluster and the subsequent pyriculol and pyriculariol production. In Pyricularia oryzae (strain 70-15 / ATCC MYA-4617 / FGSC 8958) (Rice blast fungus), this protein is Pyriculol/pyriculariol biosynthesis cluster transcription factor 1.